The following is a 283-amino-acid chain: Phospholipase C (283 aa).

An N-terminal signal peptide occupies residues 1-24 (MKKKVLALAAAITVVAPLQSVAFA). A propeptide spanning residues 25–38 (HENDGGSKIKIVHR) is cleaved from the precursor. Zn(2+)-binding residues include W39, H52, D93, H107, H156, D160, H166, H180, and E184. Positions 39–283 (WSAEDKHKEG…QLWFDTYGDR (245 aa)) constitute a Zn-dependent PLC domain.

It belongs to the bacterial zinc-metallophospholipase C family. Monomer. The cofactor is Zn(2+).

It catalyses the reaction a 1,2-diacyl-sn-glycero-3-phosphocholine + H2O = phosphocholine + a 1,2-diacyl-sn-glycerol + H(+). In terms of biological role, required, with sphingomyelinase, to effect target cell lysis (hemolysis). This is Phospholipase C (plc) from Bacillus cereus.